Here is a 210-residue protein sequence, read N- to C-terminus: 7-cyano-7-deazaguanine synthase 2 (210 aa).

10–20 (HSGGMDSTTCL) serves as a coordination point for ATP. Zn(2+) is bound by residues C180, C193, C196, and C199.

The protein belongs to the QueC family. Zn(2+) serves as cofactor.

It carries out the reaction 7-carboxy-7-deazaguanine + NH4(+) + ATP = 7-cyano-7-deazaguanine + ADP + phosphate + H2O + H(+). It functions in the pathway purine metabolism; 7-cyano-7-deazaguanine biosynthesis. Functionally, catalyzes the ATP-dependent conversion of 7-carboxy-7-deazaguanine (CDG) to 7-cyano-7-deazaguanine (preQ(0)). The sequence is that of 7-cyano-7-deazaguanine synthase 2 from Rhodopseudomonas palustris (strain HaA2).